The sequence spans 201 residues: Small ribosomal subunit protein uS4c (201 aa).

The segment at 15-43 (LGALPGLTNKRPRAGSDLRNQSRSGKKSQ) is disordered. The 64-residue stretch at 89–152 (MRLDNILFRL…NSRTLIQNSL (64 aa)) folds into the S4 RNA-binding domain.

This sequence belongs to the universal ribosomal protein uS4 family. Part of the 30S ribosomal subunit. Contacts protein S5. The interaction surface between S4 and S5 is involved in control of translational fidelity.

The protein localises to the plastid. It localises to the chloroplast. In terms of biological role, one of the primary rRNA binding proteins, it binds directly to 16S rRNA where it nucleates assembly of the body of the 30S subunit. With S5 and S12 plays an important role in translational accuracy. The chain is Small ribosomal subunit protein uS4c (rps4) from Panax ginseng (Korean ginseng).